A 680-amino-acid polypeptide reads, in one-letter code: Dipeptidyl carboxypeptidase (680 aa).

Zn(2+) is bound at residue histidine 469. Glutamate 470 is a catalytic residue. Zn(2+)-binding residues include histidine 473 and histidine 476.

It belongs to the peptidase M3 family. Requires Zn(2+) as cofactor.

Its subcellular location is the cytoplasm. The enzyme catalyses Hydrolysis of unblocked, C-terminal dipeptides from oligopeptides, with broad specificity. Does not hydrolyze bonds in which P1' is Pro, or both P1 and P1' are Gly.. Functionally, removes dipeptides from the C-termini of N-blocked tripeptides, tetrapeptides and larger peptides. The protein is Dipeptidyl carboxypeptidase (dcp) of Salmonella typhimurium (strain LT2 / SGSC1412 / ATCC 700720).